Reading from the N-terminus, the 1070-residue chain is Carbamoyl phosphate synthase large chain (1070 aa).

The segment at 1–401 (MPKRDDIKTI…ALLKAVRSLE (401 aa)) is carboxyphosphate synthetic domain. 12 residues coordinate ATP: arginine 129, arginine 169, glycine 175, glycine 176, lysine 208, isoleucine 210, glutamate 215, glycine 241, isoleucine 242, histidine 243, glutamine 284, and glutamate 298. In terms of domain architecture, ATP-grasp 1 spans 133 to 327 (RDLMNELGEP…IAKLAAKIAV (195 aa)). 3 residues coordinate Mg(2+): glutamine 284, glutamate 298, and asparagine 300. The Mn(2+) site is built by glutamine 284, glutamate 298, and asparagine 300. An oligomerization domain region spans residues 402–546 (IGADHLLLEE…YSTYEEENES (145 aa)). The tract at residues 547 to 929 (TRSAKESVIV…ALYKGFVASG (383 aa)) is carbamoyl phosphate synthetic domain. The ATP-grasp 2 domain occupies 671-861 (EKALEILQIP…MANVATRVIL (191 aa)). ATP-binding residues include arginine 707, arginine 746, valine 748, glutamate 752, glycine 777, valine 778, histidine 779, serine 780, glutamine 820, and glutamate 832. The Mg(2+) site is built by glutamine 820, glutamate 832, and asparagine 834. Residues glutamine 820, glutamate 832, and asparagine 834 each contribute to the Mn(2+) site. The MGS-like domain maps to 930-1070 (TTMHDYGTVL…SEVKQPKARV (141 aa)). Positions 930-1070 (TTMHDYGTVL…SEVKQPKARV (141 aa)) are allosteric domain.

It belongs to the CarB family. As to quaternary structure, composed of two chains; the small (or glutamine) chain promotes the hydrolysis of glutamine to ammonia, which is used by the large (or ammonia) chain to synthesize carbamoyl phosphate. Tetramer of heterodimers (alpha,beta)4. Mg(2+) is required as a cofactor. Mn(2+) serves as cofactor.

The catalysed reaction is hydrogencarbonate + L-glutamine + 2 ATP + H2O = carbamoyl phosphate + L-glutamate + 2 ADP + phosphate + 2 H(+). It catalyses the reaction hydrogencarbonate + NH4(+) + 2 ATP = carbamoyl phosphate + 2 ADP + phosphate + 2 H(+). The protein operates within amino-acid biosynthesis; L-arginine biosynthesis; carbamoyl phosphate from bicarbonate: step 1/1. Its pathway is pyrimidine metabolism; UMP biosynthesis via de novo pathway; (S)-dihydroorotate from bicarbonate: step 1/3. Functionally, large subunit of the glutamine-dependent carbamoyl phosphate synthetase (CPSase). CPSase catalyzes the formation of carbamoyl phosphate from the ammonia moiety of glutamine, carbonate, and phosphate donated by ATP, constituting the first step of 2 biosynthetic pathways, one leading to arginine and/or urea and the other to pyrimidine nucleotides. The large subunit (synthetase) binds the substrates ammonia (free or transferred from glutamine from the small subunit), hydrogencarbonate and ATP and carries out an ATP-coupled ligase reaction, activating hydrogencarbonate by forming carboxy phosphate which reacts with ammonia to form carbamoyl phosphate. This is Carbamoyl phosphate synthase large chain from Listeria monocytogenes serotype 4b (strain F2365).